Reading from the N-terminus, the 445-residue chain is Na(+)-translocating NADH-quinone reductase subunit A (445 aa).

Belongs to the NqrA family. Composed of six subunits; NqrA, NqrB, NqrC, NqrD, NqrE and NqrF.

The enzyme catalyses a ubiquinone + n Na(+)(in) + NADH + H(+) = a ubiquinol + n Na(+)(out) + NAD(+). NQR complex catalyzes the reduction of ubiquinone-1 to ubiquinol by two successive reactions, coupled with the transport of Na(+) ions from the cytoplasm to the periplasm. NqrA to NqrE are probably involved in the second step, the conversion of ubisemiquinone to ubiquinol. This is Na(+)-translocating NADH-quinone reductase subunit A from Marinomonas sp. (strain MWYL1).